The chain runs to 1010 residues: Trifunctional purine biosynthetic protein adenosine-3 (1010 aa).

Ala-2 carries the N-acetylalanine modification. The region spanning 111–318 (KEFMDRHGIS…LYEVIQSILD (208 aa)) is the ATP-grasp domain. ATP contacts are provided by residues 190–193 (EELL), Glu-197, Arg-220, and Asn-229. Mg(2+) is bound by residues Glu-288 and Asn-290. Lys-350 carries the post-translational modification N6-acetyllysine. The interval 434 to 809 (GLTYKESGVD…HFSVQPKKAR (376 aa)) is AIRS domain. Ser-440 carries the phosphoserine modification. Thr-682 carries the post-translational modification Phosphothreonine. Position 802 is a phosphoserine (Ser-802). The tract at residues 810–1010 (VAVLISGTGS…NGRICWVTED (201 aa)) is GART domain. Residue 818-820 (GSN) coordinates N(1)-(5-phospho-beta-D-ribosyl)glycinamide. Residues Arg-871, 896 to 899 (MRIL), and Asn-913 each bind (6R)-10-formyltetrahydrofolate. Catalysis depends on His-915, which acts as the Proton donor. 947 to 951 (AEDVD) is a binding site for (6R)-10-formyltetrahydrofolate. 977-980 (KLAE) is a binding site for N(1)-(5-phospho-beta-D-ribosyl)glycinamide.

In the N-terminal section; belongs to the GARS family. This sequence in the central section; belongs to the AIR synthase family. The protein in the C-terminal section; belongs to the GART family. As to quaternary structure, homodimer. Mg(2+) serves as cofactor. Mn(2+) is required as a cofactor.

It catalyses the reaction 5-phospho-beta-D-ribosylamine + glycine + ATP = N(1)-(5-phospho-beta-D-ribosyl)glycinamide + ADP + phosphate + H(+). It carries out the reaction 2-formamido-N(1)-(5-O-phospho-beta-D-ribosyl)acetamidine + ATP = 5-amino-1-(5-phospho-beta-D-ribosyl)imidazole + ADP + phosphate + H(+). The enzyme catalyses N(1)-(5-phospho-beta-D-ribosyl)glycinamide + (6R)-10-formyltetrahydrofolate = N(2)-formyl-N(1)-(5-phospho-beta-D-ribosyl)glycinamide + (6S)-5,6,7,8-tetrahydrofolate + H(+). It functions in the pathway purine metabolism; IMP biosynthesis via de novo pathway; 5-amino-1-(5-phospho-D-ribosyl)imidazole from N(2)-formyl-N(1)-(5-phospho-D-ribosyl)glycinamide: step 2/2. The protein operates within purine metabolism; IMP biosynthesis via de novo pathway; N(1)-(5-phospho-D-ribosyl)glycinamide from 5-phospho-alpha-D-ribose 1-diphosphate: step 2/2. It participates in purine metabolism; IMP biosynthesis via de novo pathway; N(2)-formyl-N(1)-(5-phospho-D-ribosyl)glycinamide from N(1)-(5-phospho-D-ribosyl)glycinamide (10-formyl THF route): step 1/1. In terms of biological role, trifunctional enzyme that catalyzes three distinct reactions as part of the 'de novo' inosine monophosphate biosynthetic pathway. The chain is Trifunctional purine biosynthetic protein adenosine-3 (GART) from Bos taurus (Bovine).